We begin with the raw amino-acid sequence, 466 residues long: 3-isopropylmalate dehydratase large subunit (466 aa).

Residues cysteine 347, cysteine 407, and cysteine 410 each coordinate [4Fe-4S] cluster.

Belongs to the aconitase/IPM isomerase family. LeuC type 1 subfamily. In terms of assembly, heterodimer of LeuC and LeuD. Requires [4Fe-4S] cluster as cofactor.

The catalysed reaction is (2R,3S)-3-isopropylmalate = (2S)-2-isopropylmalate. Its pathway is amino-acid biosynthesis; L-leucine biosynthesis; L-leucine from 3-methyl-2-oxobutanoate: step 2/4. In terms of biological role, catalyzes the isomerization between 2-isopropylmalate and 3-isopropylmalate, via the formation of 2-isopropylmaleate. In Shewanella loihica (strain ATCC BAA-1088 / PV-4), this protein is 3-isopropylmalate dehydratase large subunit.